The primary structure comprises 1252 residues: MSCTASYAGMTTPVKDKEGHGIPCLQPIDVVECTYQYFTKSRNKLSLRVGDLIYVLTKGSNGWWDGVLIRHSANNNNNSLILDRGWFPPSFTRSILNELHGVPDIGNELEIFQAGLNLKLELSSNPVILSLEDFLDCCRDIEFKEQLAWSPTPVHERKGCCELLYYNQDLDVYCRTLPYLPQNQVETVNDYSSFPAISKIAGKKMPITSSPDLFYLNDCDVVYWYDLTRLVCHYVNLTERDLLANEREKFLTSLDLLTAQITCVYMLFRNLRLVEDSFKKTLKKLIYTLSRFSINANIWFHSTPFEEREAIASQKDPERRSPLLQSILGTFQKFHFLLRLLHFLSNPNELTILPQLTPRFFKDSFNTISWNNPFLRKHLNQHMSHDLPRQMIKAVAGASGIVAENNDEIPASKQGTSCSSETSHHSPSAPFQRRRRGTIFSNVPGSSDESDTIWSKRKKPYPLNEETLSLVRARKEQLDAKLKQMIKSANEYLSNTANFSKMLNFEMNFKTYEEVSGTIPIIDILENLDLTIYLNLRELGDENRVFDEDVAIDDEDKEFLKHSLSSLSYILSDYFNMKQYFHDVVVKFIIVAQHLTLEDPFVFSPMQNDLPTGYYEPMKPSSLNLDNAKDKKNGSQNTDIQEEEDEYEPDPDSLILFHNLINQDSDFNDLKFFNLAHVFKKSCDDYFDVLKLSIEFVNRLILERENLLNYAARMMKNNITELLLRGEEGYGSYDGGETAEKSDTNAVYADSDTKDNDEWRDSQVKLPRYLQREYDSELIWGSNNRIKGGSKHALISYLTDNEKKDLFFNITFLITFRSIFTTTEFLSYLISQYNLDPPEDLCFEEYNEWVTKKLIPVKCRVVEIMTTFFKQYWFPGYDEPDLATLNLDYFAQVAIKENITGSVELLKEVNQKFKHGNMQEATAPMKTLDQQICQEHYWGTLYSTTESILAVDPVLFATQLTILEHEIYCEITIFDCLQKIWKNKYTKSYGASPGLNEFISFANKLTNFISYSIVKEADKSKRAKLLSHFIFIAEYCRKFNNFSSMTAIISALYSSSIYRLEKTWQAVIPQTRDLLQSLDKLMDPKKNFINYRSELKSLHSAPCVPFFGVYLSDLTFTDSGNPDYLVLEHGLKGVHDEKKYINFNKRSRLVDILQEIIYFKKTHYDFTKDRTVIECISNSLENIPHIEKQYQLSLIIEPKPRKKVVPNSNSNNKSQEKSRDDQTDEGKTSTKKDRFSKFQLHKTKKKAPKVSK.

Residues 26–97 (QPIDVVECTY…PPSFTRSILN (72 aa)) enclose the SH3 domain. 2 disordered regions span residues 409-454 (IPAS…DTIW) and 623-648 (LNLD…DEYE). The span at 416–428 (TSCSSETSHHSPS) shows a compositional bias: low complexity. The region spanning 782 to 914 (SNNRIKGGSK…LLKEVNQKFK (133 aa)) is the N-terminal Ras-GEF domain. Residues 952-1199 (DPVLFATQLT…YQLSLIIEPK (248 aa)) form the Ras-GEF domain. The interval 1201-1252 (RKKVVPNSNSNNKSQEKSRDDQTDEGKTSTKKDRFSKFQLHKTKKKAPKVSK) is disordered. Over residues 1214–1236 (SQEKSRDDQTDEGKTSTKKDRFS) the composition is skewed to basic and acidic residues. Residues 1239-1252 (QLHKTKKKAPKVSK) show a composition bias toward basic residues.

Its function is as follows. Promotes the exchange of Ras-bound GDP by GTP. This is Guanine nucleotide exchange factor SDC25 (SDC25) from Saccharomyces cerevisiae (strain YJM789) (Baker's yeast).